A 264-amino-acid chain; its full sequence is Phosphonoacetaldehyde hydrolase (264 aa).

The Nucleophile role is filled by D9. 2 residues coordinate Mg(2+): D9 and A11. The Schiff-base intermediate with substrate role is filled by K50. Position 183 (D183) interacts with Mg(2+).

This sequence belongs to the HAD-like hydrolase superfamily. PhnX family. Homodimer. Mg(2+) serves as cofactor.

It catalyses the reaction phosphonoacetaldehyde + H2O = acetaldehyde + phosphate + H(+). Its function is as follows. Involved in phosphonate degradation. This Bacillus anthracis protein is Phosphonoacetaldehyde hydrolase.